The chain runs to 85 residues: Large ribosomal subunit protein bL27 (85 aa).

A disordered region spans residues 1 to 21 (MAHKKAGGSTRNGRDSESKRL).

Belongs to the bacterial ribosomal protein bL27 family.

The chain is Large ribosomal subunit protein bL27 from Photorhabdus laumondii subsp. laumondii (strain DSM 15139 / CIP 105565 / TT01) (Photorhabdus luminescens subsp. laumondii).